A 475-amino-acid chain; its full sequence is Glucose-6-phosphate 1-dehydrogenase gcd1 (475 aa).

Arg-42 and Lys-146 together coordinate NADP(+). The D-glucose 6-phosphate site is built by Lys-146, Glu-214, and Asp-233. The active-site Proton acceptor is the His-238. Lys-332 contributes to the D-glucose 6-phosphate binding site. 2 residues coordinate NADP(+): Arg-342 and Arg-365.

Belongs to the glucose-6-phosphate dehydrogenase family.

It is found in the cytoplasm. The catalysed reaction is D-glucose 6-phosphate + NADP(+) = 6-phospho-D-glucono-1,5-lactone + NADPH + H(+). The protein operates within carbohydrate degradation; pentose phosphate pathway; D-ribulose 5-phosphate from D-glucose 6-phosphate (oxidative stage): step 1/3. Functionally, catalyzes the rate-limiting step of the oxidative pentose-phosphate pathway, which represents a route for the dissimilation of carbohydrates besides glycolysis. The main function of this enzyme is to provide reducing power (NADPH) and pentose phosphates for fatty acid and nucleic acid synthesis. In Schizosaccharomyces pombe (strain 972 / ATCC 24843) (Fission yeast), this protein is Glucose-6-phosphate 1-dehydrogenase gcd1.